The primary structure comprises 503 residues: Maturase K (503 aa).

It belongs to the intron maturase 2 family. MatK subfamily.

Its subcellular location is the plastid. The protein resides in the chloroplast. Functionally, usually encoded in the trnK tRNA gene intron. Probably assists in splicing its own and other chloroplast group II introns. In Actinodium cunninghamii (Albany daisy), this protein is Maturase K.